The primary structure comprises 320 residues: Malate dehydrogenase (320 aa).

Residues 10–15 (GAGQIG) and D34 each bind NAD(+). Substrate contacts are provided by R83 and R89. NAD(+) is bound by residues N96 and 119 to 121 (ITN). 2 residues coordinate substrate: N121 and R152. H176 serves as the catalytic Proton acceptor.

This sequence belongs to the LDH/MDH superfamily. MDH type 3 family.

The catalysed reaction is (S)-malate + NAD(+) = oxaloacetate + NADH + H(+). In terms of biological role, catalyzes the reversible oxidation of malate to oxaloacetate. This is Malate dehydrogenase from Methylorubrum populi (strain ATCC BAA-705 / NCIMB 13946 / BJ001) (Methylobacterium populi).